We begin with the raw amino-acid sequence, 178 residues long: FXYD domain-containing ion transport regulator 5 (178 aa).

An N-terminal signal peptide occupies residues 1–21 (MSPSGRLCLLTIVGLILPTRG). The Extracellular segment spans residues 22-145 (QTLKDTTSSS…FYDEHTLRKR (124 aa)). The disordered stretch occupies residues 23 to 131 (TLKDTTSSSS…QTLKPSGFHE (109 aa)). 2 stretches are compositionally biased toward low complexity: residues 26-36 (DTTSSSSADST) and 68-77 (TPQPQTQTQQ). The span at 103–125 (DTTTLSERPSPSTDVQTDPQTLK) shows a compositional bias: polar residues. Residues 146 to 164 (GLLVAAVLFITGIIILTSG) traverse the membrane as a helical segment. Topologically, residues 165–178 (KCRQLSRLCRNRCR) are cytoplasmic.

It belongs to the FXYD family. Regulatory subunit of the sodium/potassium-transporting ATPase which is composed of a catalytic alpha subunit, a non-catalytic beta subunit and an additional regulatory subunit. The regulatory subunit, a member of the FXYD protein family, modulates the enzymatic activity in a tissue- and isoform-specific way by changing affinities of the Na+/K+-ATPase toward Na(+), K(+) or ATP. Post-translationally, glycosylated.

It is found in the cell membrane. The protein resides in the basolateral cell membrane. Functionally, associates with and regulates the activity of the sodium/potassium-transporting ATPase (NKA) which catalyzes the hydrolysis of ATP coupled with the exchange of Na(+) and K(+) ions across the plasma membrane. May increase NKA activity by increasing the apparent affinity for Na(+). Involved in down-regulation of E-cadherin which results in reduced cell adhesion. Promotes metastasis. The chain is FXYD domain-containing ion transport regulator 5 (FXYD5) from Homo sapiens (Human).